The sequence spans 276 residues: Large ribosomal subunit protein uL2 (276 aa).

The interval 221–276 is disordered; that stretch reads RGSVMNPNDHPHGGGEGRAPIGRKAPVTPWGKPTLGLKTRKKKNKSDQYIIRRRKK.

The protein belongs to the universal ribosomal protein uL2 family. In terms of assembly, part of the 50S ribosomal subunit. Forms a bridge to the 30S subunit in the 70S ribosome.

One of the primary rRNA binding proteins. Required for association of the 30S and 50S subunits to form the 70S ribosome, for tRNA binding and peptide bond formation. It has been suggested to have peptidyltransferase activity; this is somewhat controversial. Makes several contacts with the 16S rRNA in the 70S ribosome. This Brevibacillus brevis (strain 47 / JCM 6285 / NBRC 100599) protein is Large ribosomal subunit protein uL2.